The sequence spans 215 residues: tRNA (guanine-N(7)-)-methyltransferase (215 aa).

Glutamate 44, glutamate 69, aspartate 96, and aspartate 118 together coordinate S-adenosyl-L-methionine. Aspartate 118 is a catalytic residue. Substrate is bound at residue lysine 122. Positions 124–129 (RHEKRR) are interaction with RNA. Substrate contacts are provided by residues aspartate 154 and 192 to 195 (TEYE).

Belongs to the class I-like SAM-binding methyltransferase superfamily. TrmB family.

It carries out the reaction guanosine(46) in tRNA + S-adenosyl-L-methionine = N(7)-methylguanosine(46) in tRNA + S-adenosyl-L-homocysteine. It functions in the pathway tRNA modification; N(7)-methylguanine-tRNA biosynthesis. In terms of biological role, catalyzes the formation of N(7)-methylguanine at position 46 (m7G46) in tRNA. The sequence is that of tRNA (guanine-N(7)-)-methyltransferase from Limosilactobacillus fermentum (strain NBRC 3956 / LMG 18251) (Lactobacillus fermentum).